The sequence spans 356 residues: S-adenosylmethionine:tRNA ribosyltransferase-isomerase (356 aa).

This sequence belongs to the QueA family. Monomer.

The protein localises to the cytoplasm. It catalyses the reaction 7-aminomethyl-7-carbaguanosine(34) in tRNA + S-adenosyl-L-methionine = epoxyqueuosine(34) in tRNA + adenine + L-methionine + 2 H(+). The protein operates within tRNA modification; tRNA-queuosine biosynthesis. In terms of biological role, transfers and isomerizes the ribose moiety from AdoMet to the 7-aminomethyl group of 7-deazaguanine (preQ1-tRNA) to give epoxyqueuosine (oQ-tRNA). In Xanthomonas campestris pv. campestris (strain B100), this protein is S-adenosylmethionine:tRNA ribosyltransferase-isomerase.